Here is a 399-residue protein sequence, read N- to C-terminus: Probable sugar efflux transporter (399 aa).

Helical transmembrane passes span 15 to 35 (VVTLAIAAFIFNTTEFAPVGL), 50 to 70 (VGMMLTIYAWVVALMSLPFML), 81 to 101 (LIGLFILFIASHVLSFFAWNF), 103 to 123 (VLVISRIGIAFAHAVFWSITS), 136 to 156 (AQALSLIATGTALAMVFGIPI), 168 to 188 (MTFLAIGLGALATLACLVKLL), 209 to 229 (PALVSVYILTVVVVTAHYTAY), 246 to 266 (FATVLLLILGGAGIIGSILFG), 273 to 293 (ASGLISLAIALLLACLLLLLP), 301 to 321 (LMLLSIFWGVAIMIIGLGMQV), 333 to 353 (VAMSLFSGIFNIGIGAGALVG), and 364 to 384 (SVGYVGAIPALVALVWSLMIF).

Belongs to the major facilitator superfamily. SotB (TC 2.A.1.2) family.

Its subcellular location is the cell inner membrane. Functionally, involved in the efflux of sugars. The physiological role may be the reduction of the intracellular concentration of toxic sugars or sugar metabolites. The chain is Probable sugar efflux transporter from Klebsiella pneumoniae subsp. pneumoniae (strain ATCC 700721 / MGH 78578).